Here is a 190-residue protein sequence, read N- to C-terminus: Adenine phosphoribosyltransferase (190 aa).

The protein belongs to the purine/pyrimidine phosphoribosyltransferase family. Homodimer.

The protein localises to the cytoplasm. It catalyses the reaction AMP + diphosphate = 5-phospho-alpha-D-ribose 1-diphosphate + adenine. The protein operates within purine metabolism; AMP biosynthesis via salvage pathway; AMP from adenine: step 1/1. Functionally, catalyzes a salvage reaction resulting in the formation of AMP, that is energically less costly than de novo synthesis. In Cupriavidus necator (strain ATCC 17699 / DSM 428 / KCTC 22496 / NCIMB 10442 / H16 / Stanier 337) (Ralstonia eutropha), this protein is Adenine phosphoribosyltransferase.